The chain runs to 105 residues: Nucleoid-associated protein MW0434 (105 aa).

The interval 1–33 (MRGGGNMQQMMKQMQKMQKKMAQEQEKLKEERI) is disordered. Positions 7 to 16 (MQQMMKQMQK) are enriched in low complexity. The span at 21–33 (MAQEQEKLKEERI) shows a compositional bias: basic and acidic residues.

This sequence belongs to the YbaB/EbfC family. Homodimer.

The protein resides in the cytoplasm. The protein localises to the nucleoid. Binds to DNA and alters its conformation. May be involved in regulation of gene expression, nucleoid organization and DNA protection. This chain is Nucleoid-associated protein MW0434, found in Staphylococcus aureus (strain MW2).